A 31-amino-acid polypeptide reads, in one-letter code: Photosystem II reaction center protein T (31 aa).

The helical transmembrane segment at 3-23 (AFSYTLLMALAAVTLFFAVAF) threads the bilayer.

The protein belongs to the PsbT family. As to quaternary structure, PSII is composed of 1 copy each of membrane proteins PsbA, PsbB, PsbC, PsbD, PsbE, PsbF, PsbH, PsbI, PsbJ, PsbK, PsbL, PsbM, PsbT, PsbX, PsbY, Psb30/Ycf12, peripheral proteins PsbO, CyanoQ (PsbQ), PsbU, PsbV and a large number of cofactors. It forms dimeric complexes.

It is found in the cellular thylakoid membrane. Functionally, found at the monomer-monomer interface of the photosystem II (PS II) dimer, plays a role in assembly and dimerization of PSII. PSII is a light-driven water plastoquinone oxidoreductase, using light energy to abstract electrons from H(2)O, generating a proton gradient subsequently used for ATP formation. The chain is Photosystem II reaction center protein T from Prochlorococcus marinus (strain MIT 9211).